The chain runs to 227 residues: UPF0173 metal-dependent hydrolase BCAH187_A4741 (227 aa).

This sequence belongs to the UPF0173 family.

This chain is UPF0173 metal-dependent hydrolase BCAH187_A4741, found in Bacillus cereus (strain AH187).